Consider the following 177-residue polypeptide: Protein LIGHT-DEPENDENT SHORT HYPOCOTYLS 10 (177 aa).

Residues 1 to 10 (MSSPRERGKS) show a composition bias toward basic and acidic residues. Disordered regions lie at residues 1-31 (MSSP…SQKR) and 144-177 (RGIP…FSFS). In terms of domain architecture, ALOG spans 25–152 (RYESQKRRDW…ARGIPYKKKK (128 aa)). The Nuclear localization signal motif lies at 150 to 154 (KKKKK). A compositionally biased stretch (low complexity) spans 168-177 (SSSSSSFSFS).

This sequence belongs to the plant homeotic and developmental regulators ALOG protein family.

It localises to the nucleus. Functionally, probable transcription regulator that acts as a developmental regulator by promoting cell growth in response to light. The sequence is that of Protein LIGHT-DEPENDENT SHORT HYPOCOTYLS 10 (LSH10) from Arabidopsis thaliana (Mouse-ear cress).